Consider the following 264-residue polypeptide: Shikimate dehydrogenase (NADP(+)) (264 aa).

Residues 14–16 (SLS) and threonine 59 contribute to the shikimate site. The active-site Proton acceptor is the lysine 63. Glutamate 75 lines the NADP(+) pocket. Shikimate is bound by residues asparagine 84 and aspartate 99. Residues 122-126 (GAGGA), 144-149 (NRTPSK), and isoleucine 205 contribute to the NADP(+) site. Residue tyrosine 207 coordinates shikimate. Residue glycine 228 participates in NADP(+) binding.

Belongs to the shikimate dehydrogenase family. In terms of assembly, homodimer.

It carries out the reaction shikimate + NADP(+) = 3-dehydroshikimate + NADPH + H(+). It functions in the pathway metabolic intermediate biosynthesis; chorismate biosynthesis; chorismate from D-erythrose 4-phosphate and phosphoenolpyruvate: step 4/7. Involved in the biosynthesis of the chorismate, which leads to the biosynthesis of aromatic amino acids. Catalyzes the reversible NADPH linked reduction of 3-dehydroshikimate (DHSA) to yield shikimate (SA). The sequence is that of Shikimate dehydrogenase (NADP(+)) from Pyrococcus abyssi (strain GE5 / Orsay).